Consider the following 343-residue polypeptide: Zinc finger CCCH domain-containing protein 1 (343 aa).

A disordered region spans residues 1–102 (MSDSGEPKPS…PERSVFHYDS (102 aa)). Positions 7–25 (PKPSQQEEPLPQPAAQETQ) are enriched in low complexity. Basic residues predominate over residues 35-44 (KPTKSKNIRK). The segment covering 79 to 91 (SSGPSKSSTTTSG) has biased composition (low complexity). The C3H1-type zinc finger occupies 200 to 228 (DYQPDICKDYKETGYCGYGDSCKFLHDRG). Residues 249–268 (RNKAMGVEDEDDEADKDSDE) form a disordered region. The span at 255 to 268 (VEDEDDEADKDSDE) shows a compositional bias: acidic residues. The segment at 277–315 (CFICREPFVDPVVTKCKHYFCEHCALKHHTKNKKCFVCN) adopts an RING-type zinc-finger fold.

The chain is Zinc finger CCCH domain-containing protein 1 from Arabidopsis thaliana (Mouse-ear cress).